An 87-amino-acid chain; its full sequence is Large ribosomal subunit protein bL27 (87 aa).

The interval 1-20 is disordered; it reads MAHKKAGGSSRNGRDSESKR.

It belongs to the bacterial ribosomal protein bL27 family.

This Thiobacillus denitrificans (strain ATCC 25259 / T1) protein is Large ribosomal subunit protein bL27.